Reading from the N-terminus, the 195-residue chain is Imidazoleglycerol-phosphate dehydratase (195 aa).

Belongs to the imidazoleglycerol-phosphate dehydratase family.

The protein localises to the cytoplasm. The enzyme catalyses D-erythro-1-(imidazol-4-yl)glycerol 3-phosphate = 3-(imidazol-4-yl)-2-oxopropyl phosphate + H2O. It functions in the pathway amino-acid biosynthesis; L-histidine biosynthesis; L-histidine from 5-phospho-alpha-D-ribose 1-diphosphate: step 6/9. This Dinoroseobacter shibae (strain DSM 16493 / NCIMB 14021 / DFL 12) protein is Imidazoleglycerol-phosphate dehydratase.